The primary structure comprises 204 residues: Large ribosomal subunit protein eL15 (204 aa).

Gly-2 is lipidated: N-myristoyl glycine. Ser-34 is subject to Phosphoserine. Lys-83 participates in a covalent cross-link: Glycyl lysine isopeptide (Lys-Gly) (interchain with G-Cter in SUMO2). Ser-97 and Ser-100 each carry phosphoserine. The disordered stretch occupies residues 165–186; sequence TSAGRKSRGLGKGHKFHHTIGG. Over residues 169–182 the composition is skewed to basic residues; the sequence is RKSRGLGKGHKFHH.

The protein belongs to the eukaryotic ribosomal protein eL15 family. Component of the large ribosomal subunit. Interacts with IFIT1 (via TPR repeats 1-4).

The protein localises to the cytoplasm. In terms of biological role, component of the large ribosomal subunit. The ribosome is a large ribonucleoprotein complex responsible for the synthesis of proteins in the cell. This Bos taurus (Bovine) protein is Large ribosomal subunit protein eL15 (RPL15).